The sequence spans 531 residues: Splicing factor ESS-2 (531 aa).

Disordered stretches follow at residues 104–163 (RTPI…RKKK) and 453–531 (PFAS…GDFF). Residues 105-114 (TPITTRSTTE) are compositionally biased toward polar residues. 2 stretches are compositionally biased toward low complexity: residues 125–136 (TPGPSSASTSSA) and 464–477 (SRPSSSKRSTTPGS). A compositionally biased stretch (polar residues) spans 480-498 (SRGSTTPGSSWSQGAQTPG).

Belongs to the ESS2 family.

It is found in the nucleus. Its function is as follows. Regulates pre-mRNA splicing. This chain is Splicing factor ESS-2 (ess-2), found in Caenorhabditis elegans.